The chain runs to 189 residues: MWVYEKKLQYPVKVSTCNPTLAKYLIEQYGGADGELAAALRYLNQRYTIPDKVIGLLTDIGTEEFAHLEMIATMVYKLTKDATPEQLREAGLGDHYVNHDSALFYHNAAGVPFTASYIQAKGDPIADLYEDIAAEEKARATYQWLIDISDDPDLNDSLRFLREREIVHSMRFREAVEILKEERDKKKIF.

It belongs to the manganese catalase family.

Functionally, the cotJ operon proteins affect spore coat composition. They are either required for the normal formation of the inner layers of the coat or are themselves structural components of the coat. This is Protein CotJC (cotJC) from Bacillus subtilis (strain 168).